Here is a 441-residue protein sequence, read N- to C-terminus: Zinc finger and BTB domain-containing protein 8A (441 aa).

Positions 24–92 (CDCSILVEGK…VYSGKLSLTG (69 aa)) constitute a BTB domain. 2 stretches are compositionally biased toward polar residues: residues 143–170 (NGVERSSFYSGGWQEGSSSPRSHLSPEQ) and 178–196 (KSWNKYNYHPASQKNTQQP). A disordered region spans residues 143-251 (NGVERSSFYS…QSEEQAQIDA (109 aa)). Phosphoserine is present on residues Ser-161 and Ser-167. Residues Lys-178, Lys-182, Lys-191, and Lys-199 each participate in a glycyl lysine isopeptide (Lys-Gly) (interchain with G-Cter in SUMO2) cross-link. A compositionally biased stretch (basic and acidic residues) spans 198–208 (AKHEPRKESIK). Positions 234–243 (SDSSSHVSQS) are enriched in low complexity. 2 C2H2-type zinc fingers span residues 282-304 (FKCPYCTHVVKRKADLKRHLRCH) and 310-333 (YPCQACGKRFSRLDHLSSHFRTIH). A Glycyl lysine isopeptide (Lys-Gly) (interchain with G-Cter in SUMO2) cross-link involves residue Lys-437.

The protein localises to the nucleus. In terms of biological role, may be involved in transcriptional regulation. In Homo sapiens (Human), this protein is Zinc finger and BTB domain-containing protein 8A (ZBTB8A).